The chain runs to 203 residues: Recombination protein RecR (203 aa).

Residues 57-72 (CARCNTFSETELCVLC) form a C4-type zinc finger. Positions 80 to 175 (DVLCVVEMPA…SVSRIARGLP (96 aa)) constitute a Toprim domain.

It belongs to the RecR family.

May play a role in DNA repair. It seems to be involved in an RecBC-independent recombinational process of DNA repair. It may act with RecF and RecO. This chain is Recombination protein RecR, found in Laribacter hongkongensis (strain HLHK9).